The chain runs to 110 residues: UPF0060 membrane protein SACE_5620 (110 aa).

The next 4 membrane-spanning stretches (helical) occupy residues 8-28, 34-54, 63-83, and 89-109; these read VVLF…VWQG, GLLW…VATF, ILAA…VVVD, and RWDL…MYAP.

This sequence belongs to the UPF0060 family.

Its subcellular location is the cell membrane. The chain is UPF0060 membrane protein SACE_5620 from Saccharopolyspora erythraea (strain ATCC 11635 / DSM 40517 / JCM 4748 / NBRC 13426 / NCIMB 8594 / NRRL 2338).